Reading from the N-terminus, the 107-residue chain is Small ribosomal subunit protein uS15 (107 aa).

Lys27 is subject to N6-acetyllysine; alternate. Position 27 is an N6-succinyllysine; alternate (Lys27). Residue Lys27 forms a Glycyl lysine isopeptide (Lys-Gly) (interchain with G-Cter in ubiquitin) linkage. A Phosphoserine modification is found at Ser30. An N6-succinyllysine modification is found at Lys34. Tyr38 carries the post-translational modification Phosphotyrosine. Residue Lys43 forms a Glycyl lysine isopeptide (Lys-Gly) (interchain with G-Cter in SUMO2) linkage.

This sequence belongs to the universal ribosomal protein uS15 family. As to quaternary structure, component of the small ribosomal subunit. Part of the small subunit (SSU) processome, composed of more than 70 proteins and the RNA chaperone small nucleolar RNA (snoRNA) U3. In terms of processing, ubiquitinated at Lys-27 by RNF14 and RNF25 in response to ribosome collisions (ribosome stalling).

The protein localises to the cytoplasm. It is found in the nucleus. Its subcellular location is the nucleolus. Component of the small ribosomal subunit. The ribosome is a large ribonucleoprotein complex responsible for the synthesis of proteins in the cell. Part of the small subunit (SSU) processome, first precursor of the small eukaryotic ribosomal subunit. During the assembly of the SSU processome in the nucleolus, many ribosome biogenesis factors, an RNA chaperone and ribosomal proteins associate with the nascent pre-rRNA and work in concert to generate RNA folding, modifications, rearrangements and cleavage as well as targeted degradation of pre-ribosomal RNA by the RNA exosome. The sequence is that of Small ribosomal subunit protein uS15 (RPS13) from Sus scrofa (Pig).